Here is a 343-residue protein sequence, read N- to C-terminus: MPKSRIMLDVLKGEAHFPPPLWMMRQAGRYLPEYRETRRRAGSFLDLCYDPDLAVEVTLQPIERFGFDASILFSDILVVPHALGRDVRFEEGRGPLLTPISVAEIMALESDVFHVNLEPVYETVRRLRAKLPDETTLIGFCGAPWTVATYMIAGHGTPDQAPARLFAYREPAAFQHLLKVLADHSAAYLIRQIEAGADVVQIFDSWSGVLDDASFDQFCVWPVAEIVRQVQAVHPDVPIIGFPKGAGARYRTYRQKTGVTGLGIDWTVPLAAAKDLQRSGAVQGNLDPLRLVAGGKALSDGVEAILKALGDGPLIFNLGHGITPETPIAHVEAMVKQVRSAAR.

Substrate contacts are provided by residues 25 to 29 (RQAGR), Phe44, Asp75, Tyr150, Ser205, and His320.

It belongs to the uroporphyrinogen decarboxylase family. As to quaternary structure, homodimer.

The protein localises to the cytoplasm. The catalysed reaction is uroporphyrinogen III + 4 H(+) = coproporphyrinogen III + 4 CO2. Its pathway is porphyrin-containing compound metabolism; protoporphyrin-IX biosynthesis; coproporphyrinogen-III from 5-aminolevulinate: step 4/4. Its function is as follows. Catalyzes the decarboxylation of four acetate groups of uroporphyrinogen-III to yield coproporphyrinogen-III. This chain is Uroporphyrinogen decarboxylase, found in Mesorhizobium japonicum (strain LMG 29417 / CECT 9101 / MAFF 303099) (Mesorhizobium loti (strain MAFF 303099)).